A 304-amino-acid polypeptide reads, in one-letter code: DCN1-like protein 3 (304 aa).

Disordered stretches follow at residues Met-1–Ser-86 and Glu-284–Thr-304. Gly-2 carries N-myristoyl glycine lipidation. Residues Ser-86–Met-278 form the DCUN1 domain.

In terms of assembly, part of a complex containing DCUN1D3, CUL3 and RBX1. Interacts (via the DCUN1 domain) with the unneddylated cullins: interacts with CUL1, CUL2, CUL3, CUL4A, CUL4B and CUL5; these interactions promote the cullin neddylation and the identity of the cullin dictates the affinity of the interaction. Interacts preferentially with CUL3; this interaction triggers the relocalization of CUL3 to the cell membrane where CUL3 is neddylated. Interacts (via DCUN1 domain) with RBX1. May also interact with regulators or subunits of cullin-RING ligases such as RNF7, ELOB and DDB1; these interactions are bridged by cullins. Interacts (via DCUN1 domain) with CAND1; this interaction is bridged by cullins and strongly inhibits cullin neddylation. These CAND-cullin-DCNL complexes can only be neddylated in the presence of a substrate adapter. Interacts (via DCUN1 domain) with the N-terminally acetylated form of UBE2M and UBE2F.

It localises to the cell membrane. The protein resides in the cytoplasm. The protein localises to the nucleus. Its subcellular location is the perinuclear region. Its function is as follows. Contributes to the neddylation of all cullins by transferring NEDD8 from N-terminally acetylated NEDD8-conjugating E2s enzyme to different cullin C-terminal domain-RBX complexes and may play a role in the cell cycle progression by regulating the SCF ubiquitin E3 ligase complex, after UV damage. At the cell membrane, can promote and as well inhibit cullins neddylation. This chain is DCN1-like protein 3, found in Pongo abelii (Sumatran orangutan).